Consider the following 443-residue polypeptide: Glutamate-1-semialdehyde 2,1-aminomutase (443 aa).

Low complexity predominate over residues 1-16 (MSVNADSQHSNNSSHQ). Positions 1 to 22 (MSVNADSQHSNNSSHQASEKAF) are disordered. Lys-277 bears the N6-(pyridoxal phosphate)lysine mark.

It belongs to the class-III pyridoxal-phosphate-dependent aminotransferase family. HemL subfamily. As to quaternary structure, homodimer. Pyridoxal 5'-phosphate serves as cofactor.

It is found in the cytoplasm. The catalysed reaction is (S)-4-amino-5-oxopentanoate = 5-aminolevulinate. The protein operates within porphyrin-containing compound metabolism; protoporphyrin-IX biosynthesis; 5-aminolevulinate from L-glutamyl-tRNA(Glu): step 2/2. The polypeptide is Glutamate-1-semialdehyde 2,1-aminomutase (Corynebacterium jeikeium (strain K411)).